Consider the following 224-residue polypeptide: 7-cyano-7-deazaguanine synthase (224 aa).

14–24 (FSGGQDSTTCL) serves as a coordination point for ATP. Cysteine 190, cysteine 198, cysteine 201, and cysteine 204 together coordinate Zn(2+).

The protein belongs to the QueC family. Requires Zn(2+) as cofactor.

The catalysed reaction is 7-carboxy-7-deazaguanine + NH4(+) + ATP = 7-cyano-7-deazaguanine + ADP + phosphate + H2O + H(+). The protein operates within purine metabolism; 7-cyano-7-deazaguanine biosynthesis. Catalyzes the ATP-dependent conversion of 7-carboxy-7-deazaguanine (CDG) to 7-cyano-7-deazaguanine (preQ(0)). This is 7-cyano-7-deazaguanine synthase from Haemophilus ducreyi (strain 35000HP / ATCC 700724).